The primary structure comprises 373 residues: Dual-specificity RNA methyltransferase RlmN (373 aa).

Catalysis depends on E91, which acts as the Proton acceptor. The Radical SAM core domain maps to 97–339 (EDDRGTLCIS…TTVRKTRGDD (243 aa)). A disulfide bridge links C104 with C344. Residues C111, C115, and C118 each coordinate [4Fe-4S] cluster. Residues 165 to 166 (GE), S197, 219 to 221 (SLH), and N301 contribute to the S-adenosyl-L-methionine site. C344 serves as the catalytic S-methylcysteine intermediate.

Belongs to the radical SAM superfamily. RlmN family. It depends on [4Fe-4S] cluster as a cofactor.

It is found in the cytoplasm. It carries out the reaction adenosine(2503) in 23S rRNA + 2 reduced [2Fe-2S]-[ferredoxin] + 2 S-adenosyl-L-methionine = 2-methyladenosine(2503) in 23S rRNA + 5'-deoxyadenosine + L-methionine + 2 oxidized [2Fe-2S]-[ferredoxin] + S-adenosyl-L-homocysteine. The enzyme catalyses adenosine(37) in tRNA + 2 reduced [2Fe-2S]-[ferredoxin] + 2 S-adenosyl-L-methionine = 2-methyladenosine(37) in tRNA + 5'-deoxyadenosine + L-methionine + 2 oxidized [2Fe-2S]-[ferredoxin] + S-adenosyl-L-homocysteine. Specifically methylates position 2 of adenine 2503 in 23S rRNA and position 2 of adenine 37 in tRNAs. m2A2503 modification seems to play a crucial role in the proofreading step occurring at the peptidyl transferase center and thus would serve to optimize ribosomal fidelity. The chain is Dual-specificity RNA methyltransferase RlmN from Paracidovorax citrulli (strain AAC00-1) (Acidovorax citrulli).